The primary structure comprises 351 residues: Increased glyphosate resistance protein (351 aa).

The segment covering 1–18 (MHREDDSTSTGRREERLS) has biased composition (basic and acidic residues). A disordered region spans residues 1-29 (MHREDDSTSTGRREERLSTGKGDSLQPGP).

Functionally, confers an increase in glyphosate resistance when expressed in E.coli. In Pseudomonas sp. (strain PG2982), this protein is Increased glyphosate resistance protein.